Here is a 443-residue protein sequence, read N- to C-terminus: Mevalonate kinase (443 aa).

ATP-binding positions include K12, S138, and 143–149 (GAGLGSS). The Mg(2+) site is built by S149 and E191. D202 acts as the Proton acceptor in catalysis.

It belongs to the GHMP kinase family. Mevalonate kinase subfamily. Homodimer. Mg(2+) is required as a cofactor.

It is found in the cytoplasm. The protein resides in the cytosol. It carries out the reaction (R)-mevalonate + ATP = (R)-5-phosphomevalonate + ADP + H(+). It participates in isoprenoid biosynthesis; isopentenyl diphosphate biosynthesis via mevalonate pathway; isopentenyl diphosphate from (R)-mevalonate: step 1/3. With respect to regulation, farnesyl pyrophosphate and geranyl pyrophosphate inhibit mevalonate kinase by binding competitively at the ATP-binding site. Its function is as follows. Mevalonate kinase; part of the second module of ergosterol biosynthesis pathway that includes the middle steps of the pathway. ERG12 converts mevalonate into 5-phosphomevalonate. The second module is carried out in the vacuole and involves the formation of farnesyl diphosphate, which is also an important intermediate in the biosynthesis of ubiquinone, dolichol, heme and prenylated proteins. Activity by the mevalonate kinase ERG12 first converts mevalonate into 5-phosphomevalonate. 5-phosphomevalonate is then further converted to 5-diphosphomevalonate by the phosphomevalonate kinase ERG8. The diphosphomevalonate decarboxylase MVD1/ERG19 then produces isopentenyl diphosphate. The isopentenyl-diphosphate delta-isomerase IDI1 then catalyzes the 1,3-allylic rearrangement of the homoallylic substrate isopentenyl (IPP) to its highly electrophilic allylic isomer, dimethylallyl diphosphate (DMAPP). Finally the farnesyl diphosphate synthase ERG20 catalyzes the sequential condensation of isopentenyl pyrophosphate with dimethylallyl pyrophosphate, and then with the resultant geranylpyrophosphate to the ultimate product farnesyl pyrophosphate. The chain is Mevalonate kinase from Saccharomyces cerevisiae (strain ATCC 204508 / S288c) (Baker's yeast).